The following is a 918-amino-acid chain: Probable UDP-N-acetylglucosamine--peptide N-acetylglucosaminyltransferase SPINDLY (918 aa).

TPR repeat units lie at residues 34-66 (GKEA…SKNV), 67-99 (EAHI…DPHN), 101-132 (CALT…DPSY), 140-171 (ATVL…DPHY), 172-205 (APAC…SPTY), 207-238 (DAYC…NNMG), 239-271 (IALT…NWHY), 273-305 (DAMY…NPHC), 306-339 (AEAC…KPNF), 341-373 (QSLN…NPTY), and 374-407 (AEAY…DPDS). The tract at residues 408–918 (RNAGQNRLLA…LNCGDQCFRV (511 aa)) is catalytic region. Positions 843–853 (QLHQQPNTSPQ) are enriched in polar residues. The disordered stretch occupies residues 843–877 (QLHQQPNTSPQKLVKDEPADDASGPEHGPASKDNP).

Belongs to the glycosyltransferase 41 family. O-GlcNAc transferase subfamily.

It localises to the nucleus. It catalyses the reaction L-seryl-[protein] + UDP-N-acetyl-alpha-D-glucosamine = 3-O-(N-acetyl-beta-D-glucosaminyl)-L-seryl-[protein] + UDP + H(+). It carries out the reaction L-threonyl-[protein] + UDP-N-acetyl-alpha-D-glucosamine = 3-O-(N-acetyl-beta-D-glucosaminyl)-L-threonyl-[protein] + UDP + H(+). The protein operates within protein modification; protein glycosylation. Its function is as follows. Probable O-linked N-acetylglucosamine transferase (OGT) involved in various processes such as gibberellin (GA) signaling pathway. OGTs catalyze the addition of nucleotide-activated sugars directly onto the polypeptide through O-glycosidic linkage with the hydroxyl of serine or threonine. Probably acts by adding O-linked sugars to yet unknown proteins. May function as a negative regulator of GA signal transduction during vernalization, inhibiting adventitious shoot elongation during vernalization. In Eustoma exaltatum subsp. russellianum (Bluebells), this protein is Probable UDP-N-acetylglucosamine--peptide N-acetylglucosaminyltransferase SPINDLY (SPY).